The primary structure comprises 237 residues: ATP-dependent dethiobiotin synthetase BioD (237 aa).

21–26 (GVGKTV) is a binding site for ATP. Thr25 serves as a coordination point for Mg(2+). Lys48 is a catalytic residue. Thr52 is a binding site for substrate. ATP contacts are provided by residues Asp56, 117–120 (EALG), 177–178 (SC), and 209–211 (PYL). Mg(2+) is bound by residues Asp56 and Glu117.

Belongs to the dethiobiotin synthetase family. As to quaternary structure, homodimer. Requires Mg(2+) as cofactor.

The protein localises to the cytoplasm. It catalyses the reaction (7R,8S)-7,8-diammoniononanoate + CO2 + ATP = (4R,5S)-dethiobiotin + ADP + phosphate + 3 H(+). It carries out the reaction (7R,8S)-8-amino-7-(carboxyamino)nonanoate + ATP = (4R,5S)-dethiobiotin + ADP + phosphate + H(+). The protein operates within cofactor biosynthesis; biotin biosynthesis; biotin from 7,8-diaminononanoate: step 1/2. Functionally, catalyzes a mechanistically unusual reaction, the ATP-dependent insertion of CO2 between the N7 and N8 nitrogen atoms of 7,8-diaminopelargonic acid (DAPA, also called 7,8-diammoniononanoate) to form a ureido ring. This cyanobacterium does not encode bioA (which catalyzes the formation of the precursor for this reaction in the cannonical pathway), instead it encodes bioU, which replaces bioA and also performs the first half of the cannonical BioD reaction. Thus in this bacteria BioD has a different substrate. In Synechocystis replacement of bioU by bioA from E.coli leads to biotin synthesis, showing BioD can use the 'cannonical' 7,8-diammoniononanoate as a substrate. This chain is ATP-dependent dethiobiotin synthetase BioD, found in Synechocystis sp. (strain ATCC 27184 / PCC 6803 / Kazusa).